Reading from the N-terminus, the 445-residue chain is Glucose-6-phosphate isomerase (445 aa).

The Proton donor role is filled by glutamate 284. Residues histidine 305 and lysine 419 contribute to the active site.

Belongs to the GPI family.

The protein localises to the cytoplasm. It carries out the reaction alpha-D-glucose 6-phosphate = beta-D-fructose 6-phosphate. The protein operates within carbohydrate biosynthesis; gluconeogenesis. It functions in the pathway carbohydrate degradation; glycolysis; D-glyceraldehyde 3-phosphate and glycerone phosphate from D-glucose: step 2/4. Catalyzes the reversible isomerization of glucose-6-phosphate to fructose-6-phosphate. The polypeptide is Glucose-6-phosphate isomerase (Leptospira borgpetersenii serovar Hardjo-bovis (strain JB197)).